The primary structure comprises 361 residues: Phosphoserine aminotransferase (361 aa).

R42 contacts L-glutamate. Pyridoxal 5'-phosphate is bound by residues 76–77 (GR), W102, T154, D173, and Q196. Residue K197 is modified to N6-(pyridoxal phosphate)lysine. 238-239 (NT) contributes to the pyridoxal 5'-phosphate binding site.

It belongs to the class-V pyridoxal-phosphate-dependent aminotransferase family. SerC subfamily. As to quaternary structure, homodimer. Pyridoxal 5'-phosphate is required as a cofactor.

The protein resides in the cytoplasm. The catalysed reaction is O-phospho-L-serine + 2-oxoglutarate = 3-phosphooxypyruvate + L-glutamate. It carries out the reaction 4-(phosphooxy)-L-threonine + 2-oxoglutarate = (R)-3-hydroxy-2-oxo-4-phosphooxybutanoate + L-glutamate. It participates in amino-acid biosynthesis; L-serine biosynthesis; L-serine from 3-phospho-D-glycerate: step 2/3. It functions in the pathway cofactor biosynthesis; pyridoxine 5'-phosphate biosynthesis; pyridoxine 5'-phosphate from D-erythrose 4-phosphate: step 3/5. Functionally, catalyzes the reversible conversion of 3-phosphohydroxypyruvate to phosphoserine and of 3-hydroxy-2-oxo-4-phosphonooxybutanoate to phosphohydroxythreonine. This Idiomarina loihiensis (strain ATCC BAA-735 / DSM 15497 / L2-TR) protein is Phosphoserine aminotransferase.